Here is a 249-residue protein sequence, read N- to C-terminus: Methylthioribulose-1-phosphate dehydratase (249 aa).

Positions 103 and 105 each coordinate Zn(2+).

The protein belongs to the aldolase class II family. MtnB subfamily. It depends on Zn(2+) as a cofactor.

The enzyme catalyses 5-(methylsulfanyl)-D-ribulose 1-phosphate = 5-methylsulfanyl-2,3-dioxopentyl phosphate + H2O. The protein operates within amino-acid biosynthesis; L-methionine biosynthesis via salvage pathway; L-methionine from S-methyl-5-thio-alpha-D-ribose 1-phosphate: step 2/6. Its function is as follows. Catalyzes the dehydration of methylthioribulose-1-phosphate (MTRu-1-P) into 2,3-diketo-5-methylthiopentyl-1-phosphate (DK-MTP-1-P). This chain is Methylthioribulose-1-phosphate dehydratase, found in Leptospira interrogans serogroup Icterohaemorrhagiae serovar copenhageni (strain Fiocruz L1-130).